The chain runs to 189 residues: Parkinson disease protein 7 homolog (189 aa).

Alanine 2 carries the N-acetylalanine; in Protein/nucleic acid deglycase DJ-1, N-terminally processed modification. 2 S-palmitoyl cysteine lipidation sites follow: cysteine 46 and cysteine 53. Residue tyrosine 67 is modified to Phosphotyrosine. Cysteine 106 functions as the Nucleophile in the catalytic mechanism. A Cysteine sulfinic acid (-SO2H); alternate modification is found at cysteine 106. A lipid anchor (S-palmitoyl cysteine; alternate) is attached at cysteine 106. The active site involves histidine 126. Lysine 130 participates in a covalent cross-link: Glycyl lysine isopeptide (Lys-Gly) (interchain with G-Cter in SUMO). At lysine 148 the chain carries N6-acetyllysine. Lysine 182 carries the post-translational modification N6-succinyllysine.

The protein belongs to the peptidase C56 family. Homodimer. Binds EFCAB6/DJBP and PIAS2. Part of a ternary complex containing PARK7, EFCAB6/DJBP and AR. Interacts (via N-terminus) with OTUD7B. Interacts with BBS1, HIPK1, CLCF1 and MTERF. Forms a complex with PINK1 and PRKN. Interacts (via C-terminus) with NCF1; the interaction is enhanced by LPS and modulates NCF1 phosphorylation and membrane translocation. Interacts with NENF. Deglycase activity does not require glutathione as a cofactor, however, glycated glutathione constitutes a PARK7 substrate. serves as cofactor. Post-translationally, sumoylated on Lys-130 by PIAS2 or PIAS4; which is essential for cell-growth promoting activity and transforming activity. Undergoes cleavage of a C-terminal peptide and subsequent activation of protease activity in response to oxidative stress. In terms of tissue distribution, detected in liver, heart, spleen and testis (at protein level). Detected in liver, heart, spleen, kidney, epididymidis, vas deferens, sperm cells and testis.

The protein localises to the cell membrane. It is found in the cytoplasm. It localises to the nucleus. Its subcellular location is the membrane raft. The protein resides in the mitochondrion. The protein localises to the endoplasmic reticulum. It carries out the reaction N(omega)-(1-hydroxy-2-oxopropyl)-L-arginyl-[protein] + H2O = lactate + L-arginyl-[protein] + H(+). It catalyses the reaction N(6)-(1-hydroxy-2-oxopropyl)-L-lysyl-[protein] + H2O = lactate + L-lysyl-[protein] + H(+). The enzyme catalyses S-(1-hydroxy-2-oxopropyl)-L-cysteinyl-[protein] + H2O = lactate + L-cysteinyl-[protein] + H(+). The catalysed reaction is N(omega)-(1-hydroxy-2-oxoethyl)-L-arginyl-[protein] + H2O = L-arginyl-[protein] + glycolate + H(+). It carries out the reaction N(6)-(1-hydroxy-2-oxoethyl)-L-lysyl-[protein] + H2O = glycolate + L-lysyl-[protein] + H(+). It catalyses the reaction S-(1-hydroxy-2-oxoethyl)-L-cysteinyl-[protein] + H2O = glycolate + L-cysteinyl-[protein] + H(+). The enzyme catalyses N(2)-(1-hydroxy-2-oxopropyl)-dGTP + H2O = lactate + dGTP + H(+). The catalysed reaction is N(2)-(1-hydroxy-2-oxopropyl)-GTP + H2O = lactate + GTP + H(+). It carries out the reaction N(2)-(1-hydroxy-2-oxopropyl)-GDP + H2O = lactate + GDP + H(+). It catalyses the reaction N(2)-(1-hydroxy-2-oxopropyl)-GMP + H2O = lactate + GMP + H(+). The enzyme catalyses N(2)-(1-hydroxy-2-oxoethyl)-dGTP + H2O = dGTP + glycolate + H(+). The catalysed reaction is N(2)-(1-hydroxy-2-oxoethyl)-GTP + H2O = glycolate + GTP + H(+). It carries out the reaction N(2)-(1-hydroxy-2-oxoethyl)-GDP + H2O = glycolate + GDP + H(+). It catalyses the reaction N(2)-(1-hydroxy-2-oxoethyl)-GMP + H2O = glycolate + GMP + H(+). The enzyme catalyses an N(2)-(1-hydroxy-2-oxopropyl)-guanosine in RNA + H2O = a guanosine in RNA + lactate + H(+). The catalysed reaction is an N(2)-(1-hydroxy-2-oxopropyl)-2'-deoxyguanosine in DNA + H2O = a 2'-deoxyguanosine in DNA + lactate + H(+). It carries out the reaction an N(2)-(1-hydroxy-2-oxoethyl)-guanosine in RNA + H2O = a guanosine in RNA + glycolate + H(+). It catalyses the reaction an N(2)-(1-hydroxy-2-oxoethyl)-2'-deoxyguanosine in DNA + H2O = a 2'-deoxyguanosine in DNA + glycolate + H(+). Multifunctional protein with controversial molecular function which plays an important role in cell protection against oxidative stress and cell death acting as oxidative stress sensor and redox-sensitive chaperone and protease. It is involved in neuroprotective mechanisms like the stabilization of NFE2L2 and PINK1 proteins, male fertility as a positive regulator of androgen signaling pathway as well as cell growth and transformation through, for instance, the modulation of NF-kappa-B signaling pathway. Has been described as a protein and nucleotide deglycase that catalyzes the deglycation of the Maillard adducts formed between amino groups of proteins or nucleotides and reactive carbonyl groups of glyoxals. But this function is rebuted by other works. As a protein deglycase, repairs methylglyoxal- and glyoxal-glycated proteins, and releases repaired proteins and lactate or glycolate, respectively. Deglycates cysteine, arginine and lysine residues in proteins, and thus reactivates these proteins by reversing glycation by glyoxals. Acts on early glycation intermediates (hemithioacetals and aminocarbinols), preventing the formation of advanced glycation endproducts (AGE) that cause irreversible damage. Also functions as a nucleotide deglycase able to repair glycated guanine in the free nucleotide pool (GTP, GDP, GMP, dGTP) and in DNA and RNA. Is thus involved in a major nucleotide repair system named guanine glycation repair (GG repair), dedicated to reversing methylglyoxal and glyoxal damage via nucleotide sanitization and direct nucleic acid repair. Protects histones from adduction by methylglyoxal, controls the levels of methylglyoxal-derived argininine modifications on chromatin. Able to remove the glycations and restore histone 3, histone glycation disrupts both local and global chromatin architecture by altering histone-DNA interactions as well as histone acetylation and ubiquitination levels. Displays a very low glyoxalase activity that may reflect its deglycase activity. Eliminates hydrogen peroxide and protects cells against hydrogen peroxide-induced cell death. Required for correct mitochondrial morphology and function as well as for autophagy of dysfunctional mitochondria. Plays a role in regulating expression or stability of the mitochondrial uncoupling proteins SLC25A14 and SLC25A27 in dopaminergic neurons of the substantia nigra pars compacta and attenuates the oxidative stress induced by calcium entry into the neurons via L-type channels during pacemaking. Regulates astrocyte inflammatory responses, may modulate lipid rafts-dependent endocytosis in astrocytes and neuronal cells. In pancreatic islets, involved in the maintenance of mitochondrial reactive oxygen species (ROS) levels and glucose homeostasis in an age- and diet dependent manner. Protects pancreatic beta cells from cell death induced by inflammatory and cytotoxic setting. Binds to a number of mRNAs containing multiple copies of GG or CC motifs and partially inhibits their translation but dissociates following oxidative stress. Metal-binding protein able to bind copper as well as toxic mercury ions, enhances the cell protection mechanism against induced metal toxicity. In macrophages, interacts with the NADPH oxidase subunit NCF1 to direct NADPH oxidase-dependent ROS production, and protects against sepsis. In Mesocricetus auratus (Golden hamster), this protein is Parkinson disease protein 7 homolog (PARK7).